A 557-amino-acid polypeptide reads, in one-letter code: Transcription factor fil1 (557 aa).

Residues Ser234–Gly258 are disordered. The segment covering Ser243–Gly258 has biased composition (low complexity). 2 consecutive GATA-type zinc fingers follow at residues Cys365 to Cys390 and Cys419 to Cys443.

It is found in the nucleus. The protein resides in the cytoplasm. Its function is as follows. Activates genes required for amino acid biosynthesis and acts as a master transcriptional regulator during amino acid starvation. Binds variations of the DNA sequence 5'-GAT[AC]GC-3'. In Schizosaccharomyces pombe (strain 972 / ATCC 24843) (Fission yeast), this protein is Transcription factor fil1.